The sequence spans 321 residues: Homoserine kinase (321 aa).

The protein belongs to the pseudomonas-type ThrB family.

It carries out the reaction L-homoserine + ATP = O-phospho-L-homoserine + ADP + H(+). The protein operates within amino-acid biosynthesis; L-threonine biosynthesis; L-threonine from L-aspartate: step 4/5. This is Homoserine kinase from Rhizobium johnstonii (strain DSM 114642 / LMG 32736 / 3841) (Rhizobium leguminosarum bv. viciae).